The following is a 269-amino-acid chain: Expansin-B11 (269 aa).

Positions 1-30 (MTVVSIMWSLVQVQVLVAVALAFLVGGAWC) are cleaved as a signal peptide. N-linked (GlcNAc...) asparagine glycosylation is present at Asn-40. Positions 69 to 175 (GGGCGYKDVN…RRVKCKYGSK (107 aa)) constitute an Expansin-like EG45 domain. 3 disulfides stabilise this stretch: Cys-72–Cys-100, Cys-103–Cys-170, and Cys-108–Cys-114. Residues 187–268 (NYLALLVKYV…GWKPNTAYTA (82 aa)) enclose the Expansin-like CBD domain.

This sequence belongs to the expansin family. Expansin B subfamily. As to expression, expressed in pollen.

Its subcellular location is the secreted. The protein localises to the cell wall. It localises to the membrane. Functionally, may aid fertilization by loosening the cell wall of the stigma and style, thereby facilitating penetration of the pollen tube. Acts selectively on grass cell walls, which are relatively poor in pectins and xyloglucans and rich in glucuronoarabinoxylans and (1-3),(1-4)-beta-D-glucans, when compared with cell walls of other angiosperms, including other monocots. The chain is Expansin-B11 (EXPB11) from Zea mays (Maize).